Reading from the N-terminus, the 481-residue chain is MTFRFDNSYARDLEGFYVDWPAAPVPAPRLLRLNRPLAEELGLDPDLLEREGAEIFSGRRLPEGAHPLAQAYAGHQFGGFSPQLGDGRALLIGEITDRAGRRRDLQLKGSGRTPFSRGADGKAALGPVLREYLVGEAMHGLGIPTTRALAAVATGEPLLRQEGERPGAILTRVAASHIRVGTFQFFAARSDIERVRRLADYAIARHYPELASAPEPYLAFYEAVAEAQAQLVARWMLVGFIHGVMNTDNMTISGETIDYGPCAFMEGYDPGTVFSSIDLQGRYAYGNQPFILAWNLARLGEALLPLLDADAERAADKANSVLETVGARYQGHWLAGMRAKLGLSGAEEGDARLAEDLLEAMRSQRADWTLTFRRLADAVTDEGALRPLFRDGSALEAWLPRWRDRLAPDAAQRMRATNPIYIARNHRVEEALAAAHAGDLAPFDRLLEALAEPFTERADRELFALPAPEGFDDSYRTFCGT.

G85, G87, R88, K108, D120, G121, R172, and R179 together coordinate ATP. D248 acts as the Proton acceptor in catalysis. Positions 249 and 258 each coordinate Mg(2+). D258 lines the ATP pocket.

Belongs to the SELO family. Mg(2+) is required as a cofactor. It depends on Mn(2+) as a cofactor.

It carries out the reaction L-seryl-[protein] + ATP = 3-O-(5'-adenylyl)-L-seryl-[protein] + diphosphate. The catalysed reaction is L-threonyl-[protein] + ATP = 3-O-(5'-adenylyl)-L-threonyl-[protein] + diphosphate. It catalyses the reaction L-tyrosyl-[protein] + ATP = O-(5'-adenylyl)-L-tyrosyl-[protein] + diphosphate. The enzyme catalyses L-histidyl-[protein] + UTP = N(tele)-(5'-uridylyl)-L-histidyl-[protein] + diphosphate. It carries out the reaction L-seryl-[protein] + UTP = O-(5'-uridylyl)-L-seryl-[protein] + diphosphate. The catalysed reaction is L-tyrosyl-[protein] + UTP = O-(5'-uridylyl)-L-tyrosyl-[protein] + diphosphate. Nucleotidyltransferase involved in the post-translational modification of proteins. It can catalyze the addition of adenosine monophosphate (AMP) or uridine monophosphate (UMP) to a protein, resulting in modifications known as AMPylation and UMPylation. The polypeptide is Protein nucleotidyltransferase YdiU (Cereibacter sphaeroides (strain ATCC 17029 / ATH 2.4.9) (Rhodobacter sphaeroides)).